The following is a 616-amino-acid chain: MNLINFSYLNLLFGAGLFSVLESATILNTESDAKKWLTTYNDEAGKYIYDATEAEWNYNTNLTDHNLGISIKKSNDLATFTEQKAIEANKKFVWKNFTDPLLKREFSKITDIGTASLSDEDFQKMSGLNSDLTKIYSTAKVCNKPNDPSGKCYPLDPDLSDIISKSNDLEELTWAWKGWRDASGKHMPDKYDEFVQLLNKAANINGYEDNGDYWRSWYESPTFRKDCEDLWQEIKPFYEQLHAYVRRKLQKKYPQIAFPKEGHIPAHLLGNMWAQSWENIEYLLRPAPDLPSMDITEELVKQNYTALKLFQLSDTFFKSLGLIQMPQPFWEKSMIEKPADRDVVCHASAWDFYNRKDFRIKQCTVVDMHWFMTTHHEMGHIEYYLHYKDQPISFRSGANPGFHEAIADIASLSVATPEYMQSVSLLPNFTDDPNGDLNFLMNQALTKVAFLPFGYLIDQWRWDVFSGDTPRPKYNSKWWHNRCKYQGVYPPVIRSEQDFDAGSKFHVPNNTPYIRYFVAHIIQFQFHEALCKAANNSRPLHRCNIANSKEAGKKLAELMKSGSSIPWPKVLENLTGSEKMSAKSLMAYYKPLIDWPEKRKPRAENWMGGKMSSWIV.

A signal peptide spans 1–23 (MNLINFSYLNLLFGAGLFSVLES). The Peptidase M2 domain occupies 27-610 (LNTESDAKKW…PRAENWMGGK (584 aa)). N-linked (GlcNAc...) asparagine glycans are attached at residues N61 and N96. A disulfide bond links C142 and C152. Chloride contacts are provided by R180 and Y218. A glycan (N-linked (GlcNAc...) asparagine) is linked at N303. A disulfide bond links C345 and C363. H376 contacts Zn(2+). E377 (proton acceptor) is an active-site residue. The Zn(2+) site is built by H380 and E404. The N-linked (GlcNAc...) asparagine glycan is linked to N428. W478 and R482 together coordinate chloride. H506 acts as the Proton donor in catalysis. R515 lines the chloride pocket. C531 and C543 are joined by a disulfide. N-linked (GlcNAc...) asparagine glycosylation is found at N535 and N573.

It belongs to the peptidase M2 family. Requires Zn(2+) as cofactor. Chloride serves as cofactor. Epithelial cells of the midgut.

It is found in the secreted. Its subcellular location is the extracellular space. The catalysed reaction is Release of a C-terminal dipeptide, oligopeptide-|-Xaa-Yaa, when Xaa is not Pro, and Yaa is neither Asp nor Glu. Thus, conversion of angiotensin I to angiotensin II, with increase in vasoconstrictor activity, but no action on angiotensin II.. Its activity is regulated as follows. Activated by chloride. Inhibited by captopril and lisinopril, and to a lesser extent by delaprilat. The chain is Angiotensin-converting enzyme (ACE) from Theromyzon tessulatum (Duck leech).